The primary structure comprises 288 residues: Energy-coupling factor transporter ATP-binding protein EcfA2 (288 aa).

Residues 3–245 form the ABC transporter domain; the sequence is IKIENLTHVY…VDTLESVGLA (243 aa). 40-47 serves as a coordination point for ATP; sequence GHTGSGKS.

This sequence belongs to the ABC transporter superfamily. Energy-coupling factor EcfA family. As to quaternary structure, forms a stable energy-coupling factor (ECF) transporter complex composed of 2 membrane-embedded substrate-binding proteins (S component), 2 ATP-binding proteins (A component) and 2 transmembrane proteins (T component).

It is found in the cell membrane. In terms of biological role, ATP-binding (A) component of a common energy-coupling factor (ECF) ABC-transporter complex. Unlike classic ABC transporters this ECF transporter provides the energy necessary to transport a number of different substrates. In Clostridium tetani (strain Massachusetts / E88), this protein is Energy-coupling factor transporter ATP-binding protein EcfA2.